The primary structure comprises 327 residues: MQHLQEIIANATSAINAAESLVALDEVRVQYLGKKGELTVQLQSLGKLPPEERRTAGQEINVAKEAVQKALAERKDALQSAELEAKLAAETIDVTLPGRRIENGGLHPVTRTIERIESFFGELGFTVESGPEIEDDFHNFDALNIAADHPARTDHDTFFFNPKLMLRTHTSGVQIRTLEERQPPLRFIAPGRVYRNDYDQTHTPMFHQVEGMLVDENVNFAQLKGILHDFLCNFFEEDLEVRFRPSYFPFTEPSAEVDVKGKNGKWLEVLGCGMVHPNVLRSVGIDPEKYSGFAFGMGVERLTMLRYGVNDLRAFFENDLRFLKQFK.

Glutamate 252 is a binding site for Mg(2+).

The protein belongs to the class-II aminoacyl-tRNA synthetase family. Phe-tRNA synthetase alpha subunit type 1 subfamily. In terms of assembly, tetramer of two alpha and two beta subunits. The cofactor is Mg(2+).

Its subcellular location is the cytoplasm. The catalysed reaction is tRNA(Phe) + L-phenylalanine + ATP = L-phenylalanyl-tRNA(Phe) + AMP + diphosphate + H(+). The chain is Phenylalanine--tRNA ligase alpha subunit from Vibrio cholerae serotype O1 (strain ATCC 39541 / Classical Ogawa 395 / O395).